The primary structure comprises 372 residues: D-alanine--D-alanine ligase (372 aa).

In terms of domain architecture, ATP-grasp spans 145–349; sequence KTVLRAGGIP…CPNLLDQLIE (205 aa). Position 176-231 (176-231) interacts with ATP; sequence DRWGTSELFVKAVSLGSSVATLPVKTETEFTKAVKEVFRYDDRLMVEPRIRGREIE. Residues aspartate 303, glutamate 316, and asparagine 318 each coordinate Mg(2+).

Belongs to the D-alanine--D-alanine ligase family. Mg(2+) serves as cofactor. Requires Mn(2+) as cofactor.

It localises to the cytoplasm. The catalysed reaction is 2 D-alanine + ATP = D-alanyl-D-alanine + ADP + phosphate + H(+). It functions in the pathway cell wall biogenesis; peptidoglycan biosynthesis. Cell wall formation. This chain is D-alanine--D-alanine ligase, found in Coxiella burnetii (strain CbuK_Q154) (Coxiella burnetii (strain Q154)).